The following is a 448-amino-acid chain: Exodeoxyribonuclease 7 large subunit (448 aa).

It belongs to the XseA family. In terms of assembly, heterooligomer composed of large and small subunits.

The protein localises to the cytoplasm. It carries out the reaction Exonucleolytic cleavage in either 5'- to 3'- or 3'- to 5'-direction to yield nucleoside 5'-phosphates.. Functionally, bidirectionally degrades single-stranded DNA into large acid-insoluble oligonucleotides, which are then degraded further into small acid-soluble oligonucleotides. The polypeptide is Exodeoxyribonuclease 7 large subunit (Shewanella baltica (strain OS185)).